The chain runs to 107 residues: Phosphoribosyl-ATP pyrophosphatase (107 aa).

This sequence belongs to the PRA-PH family.

The protein resides in the cytoplasm. The catalysed reaction is 1-(5-phospho-beta-D-ribosyl)-ATP + H2O = 1-(5-phospho-beta-D-ribosyl)-5'-AMP + diphosphate + H(+). It participates in amino-acid biosynthesis; L-histidine biosynthesis; L-histidine from 5-phospho-alpha-D-ribose 1-diphosphate: step 2/9. The chain is Phosphoribosyl-ATP pyrophosphatase from Nitrobacter hamburgensis (strain DSM 10229 / NCIMB 13809 / X14).